The chain runs to 126 residues: Histone H2B 1.1 (126 aa).

The span at 1–12 (MPEPAKSAPAPK) shows a compositional bias: low complexity. Residues 1-35 (MPEPAKSAPAPKKGSKKAVTKTQKKDGKKRRKSRK) are disordered. N6-acetyllysine is present on residues Lys-6 and Lys-13. The residue at position 15 (Ser-15) is a Phosphoserine. N6-acetyllysine occurs at positions 16 and 21. O-linked (GlcNAc) serine glycosylation occurs at Ser-113. Lys-121 participates in a covalent cross-link: Glycyl lysine isopeptide (Lys-Gly) (interchain with G-Cter in ubiquitin).

The protein belongs to the histone H2B family. The nucleosome is a histone octamer containing two molecules each of H2A, H2B, H3 and H4 assembled in one H3-H4 heterotetramer and two H2A-H2B heterodimers. The octamer wraps approximately 147 bp of DNA. Monoubiquitination of Lys-121 by BRE1 gives a specific tag for epigenetic transcriptional activation and is also prerequisite for histone H3 'Lys-4' and 'Lys-79' methylation. Post-translationally, phosphorylated on Ser-15 during developmentally programmed apoptosis; which may facilitate apoptotic chromatin condensation. In terms of processing, glcNAcylation at Ser-113 promotes monoubiquitination of Lys-121. It fluctuates in response to extracellular glucose, and associates with transcribed genes.

It localises to the nucleus. It is found in the chromosome. In terms of biological role, core component of nucleosome. Nucleosomes wrap and compact DNA into chromatin, limiting DNA accessibility to the cellular machineries which require DNA as a template. Histones thereby play a central role in transcription regulation, DNA repair, DNA replication and chromosomal stability. DNA accessibility is regulated via a complex set of post-translational modifications of histones, also called histone code, and nucleosome remodeling. The sequence is that of Histone H2B 1.1 from Xenopus laevis (African clawed frog).